Here is an 881-residue protein sequence, read N- to C-terminus: Fanconi anemia core complex-associated protein 100 (881 aa).

The segment at 94 to 119 (GRSRSTSQDDRDSEDGDQPSPVIPVD) is disordered. Position 667 is a phosphoserine (Ser-667).

In terms of assembly, belongs to the multisubunit FA complex composed of FANCA, FANCB, FANCC, FANCE, FANCF, FANCG, FANCL/PHF9, FANCM, FAAP24 and FAAP100. Forms a subcomplex with FANCB and FANCL.

Its subcellular location is the nucleus. Its function is as follows. Plays a role in Fanconi anemia-associated DNA damage response network. Regulates FANCD2 monoubiquitination and the stability of the FA core complex. Induces chromosomal instability as well as hypersensitivity to DNA cross-linking agents, when repressed. The polypeptide is Fanconi anemia core complex-associated protein 100 (Homo sapiens (Human)).